The sequence spans 402 residues: Zinc finger protein 322 (402 aa).

A C2H2-type 1; atypical zinc finger spans residues 43-65 (YQCLECKQNFCENLALIMCERTH). 8 C2H2-type zinc fingers span residues 71-93 (YKCDMCEKTFVQSSDLTSHQRIH), 99-121 (YKCSKCEKSFWHHLALSGHQRTH), 127-149 (YTCDICGKNFGQSSDLLVHQRSH), 155-177 (YLCSECDKCFSRSTNLIRHRRTH), 183-205 (FKCLECEKAFSGKSDLISHQRTH), 211-233 (YKCNKCEKSYRHRSAFIVHKRVH), 239-261 (YKCGACEKCFGQKSDLIVHQRVH), and 267-289 (YKCLECMRSFTRSANLIRHQATH). A C2H2-type 10; degenerate zinc finger spans residues 293–315 (FKCLEYEKSFNCSSDLIVHQRIH). The C2H2-type 11; degenerate zinc-finger motif lies at 351 to 373 (YKYTVCDKSFHQSSALLQHQTVH). Residue Ser-391 is modified to Phosphoserine.

This sequence belongs to the krueppel C2H2-type zinc-finger protein family. As to quaternary structure, interacts with POU5F1. As to expression, ubiquitous. Highly expressed in heart and skeletal muscle.

The protein localises to the cytoplasm. It localises to the nucleus. In terms of biological role, transcriptional activator. Important for maintenance of pluripotency in embryonic stem cells. Binds directly to the POU5F1 distal enhancer and the NANOG proximal promoter, and enhances expression of both genes. Can also bind to numerous other gene promoters and regulates expression of many other pluripotency factors, either directly or indirectly. Promotes inhibition of MAPK signaling during embryonic stem cell differentiation. The polypeptide is Zinc finger protein 322 (ZNF322) (Homo sapiens (Human)).